The following is a 720-amino-acid chain: Ciliated left-right organizer metallopeptidase (720 aa).

The signal sequence occupies residues 1-25; sequence MTVSFSMFQIYRLVWLSFMTSMCLS. The Extracellular segment spans residues 26–668; sequence ACIHDSVLQE…ALYVSHMLYS (643 aa). Position 243 (His243) interacts with Zn(2+). Glu244 is an active-site residue. Zn(2+)-binding residues include His247 and His322. Residues 669–689 form a helical membrane-spanning segment; the sequence is YVIGGGCCAVCGAAIIFALFW. Residues 690–720 lie on the Cytoplasmic side of the membrane; that stretch reads YKLRRQFLRVGSSYPPETSNHERPQIPADLV.

The protein belongs to the peptidase M8 family. Zn(2+) is required as a cofactor.

It localises to the membrane. Putative metalloprotease playing a role in the process of LR patterning. This is Ciliated left-right organizer metallopeptidase (cirop) from Xenopus laevis (African clawed frog).